Reading from the N-terminus, the 133-residue chain is Thioredoxin-2, mitochondrial (133 aa).

A mitochondrion-targeting transit peptide spans 1–29; sequence MRGFIANSLKPHMRSFALRRSFTSSRILR. The region spanning 30–133 is the Thioredoxin domain; sequence KVNAVESFGD…LSSLLAKYQE (104 aa). Active-site nucleophile residues include Cys-59 and Cys-62. Cys-59 and Cys-62 are disulfide-bonded.

This sequence belongs to the thioredoxin family. As to quaternary structure, interacts with arg3.

It localises to the mitochondrion. Disulfide reductase which serves multiple functions in mitochondria, protecting mitochondrial components against thiol-oxidative damage as a thiol-disulfide oxidoreductase, and supporting urea cycle and respiration in mitochondria in a manner independent of active site thiols. This is Thioredoxin-2, mitochondrial (trx2) from Schizosaccharomyces pombe (strain 972 / ATCC 24843) (Fission yeast).